We begin with the raw amino-acid sequence, 611 residues long: Menin (611 aa).

An interaction with FANCD2 region spans residues 214–390 (GVAERSWLYL…SLLETGEERT (177 aa)). The disordered stretch occupies residues 460-553 (REAEAAEAEE…SPPPEGPVLT (94 aa)). Over residues 484 to 500 (RRESKPEEPPPPKKPAL) the composition is skewed to basic and acidic residues. Phosphoserine is present on residues serine 487 and serine 544. Position 595 is a phosphothreonine (threonine 595).

Component of the MLL-HCF complex, at least composed of KMT2A/MLL1, MEN1, ASH2L, RBBP5, DPY30, WDR5, HCFC1 and HCFC2. Component of the menin-associated histone methyltransferase complex, at least composed of KMT2B/MLL4, MEN1, ASH2L, RBBP5, DPY30 and WDR5. Interacts with POLR2B. Interacts with POLR2A phosphorylated at 'Ser-5', but not with the unphosphorylated, nor 'Ser-2' phosphorylated POLR2A forms. Interacts with FANCD2 and DBF4. Interacts with SMAD3, but not with SMAD2, nor SMAD4. Directly interacts with NFKB1, NFKB2 and RELA. Interacts with JUND (via MBM motif); inhibits the interaction of JUND with MAPK10 and the phosphorylation of JUND by MAP kinases MAPK8 and MAPK10. Interacts with KMT2A (via MBM motif). The KMT2A-MEN1 complex interacts with PSIP1 with a greater affinity as MEN1 enhances interaction of KMT2A with PSIP1. In terms of tissue distribution, widely expressed, with high levels in hippocampus, cerebral cortex, testis and thymus (at protein level). Also expressed at high levels in pancreatic islets, ovary and bone marrow. In the brain, highest expression in hippocampus pyramidal nerve cells (at protein level). In the testis, may be expressed in spermatogonia (at protein level). Low expression, if any, in skeletal muscle.

It localises to the nucleus. Its function is as follows. Essential component of a MLL/SET1 histone methyltransferase (HMT) complex, a complex that specifically methylates 'Lys-4' of histone H3 (H3K4). Functions as a transcriptional regulator. Binds to the TERT promoter and represses telomerase expression. Plays a role in TGFB1-mediated inhibition of cell-proliferation, possibly regulating SMAD3 transcriptional activity. Represses JUND-mediated transcriptional activation on AP1 sites, as well as that mediated by NFKB subunit RELA. Positively regulates HOXC8 and HOXC6 gene expression. May be involved in normal hematopoiesis through the activation of HOXA9 expression. May be involved in DNA repair. In Mus musculus (Mouse), this protein is Menin (Men1).